Here is a 161-residue protein sequence, read N- to C-terminus: Arachidonate 5-lipoxygenase-activating protein (161 aa).

At 1–8 (MDQEAVGN) the chain is on the lumenal side. The helical transmembrane segment at 9 to 30 (VVLLAIVTLISVVQNAFFAHKV) threads the bilayer. Over 31–52 (ELESKAQSGRSFQRTGTLAFER) the chain is Cytoplasmic. Residues 53-77 (VYTANQNCVDAYPTFLVVLWTAGLL) form a helical membrane-spanning segment. Residues 78-80 (CSQ) lie on the Lumenal side of the membrane. The chain crosses the membrane as a helical span at residues 81-102 (VPAAFAGLMYLFVRQKYFVGYL). At 103–107 (GERTQ) the chain is on the cytoplasmic side. Residues 108–115 (STPGYIFG) lie within the membrane without spanning it. The chain crosses the membrane as a helical span at residues 116–128 (KRIILFLFLMSLA). Residues 129-161 (GILNHYLIFFFGSDFENYIRTITTTISPLLLIP) are Lumenal-facing.

The protein belongs to the MAPEG family. As to quaternary structure, homotrimer. Interacts with LTC4S and ALOX5.

Its subcellular location is the nucleus membrane. The protein localises to the endoplasmic reticulum membrane. In terms of biological role, required for leukotriene biosynthesis by ALOX5 (5-lipoxygenase). Anchors ALOX5 to the membrane. Binds arachidonic acid, and could play an essential role in the transfer of arachidonic acid to ALOX5. Binds to MK-886, a compound that blocks the biosynthesis of leukotrienes. The polypeptide is Arachidonate 5-lipoxygenase-activating protein (Alox5ap) (Rattus norvegicus (Rat)).